The sequence spans 622 residues: Chaperone protein HscA homolog (622 aa).

It belongs to the heat shock protein 70 family.

Chaperone involved in the maturation of iron-sulfur cluster-containing proteins. Has a low intrinsic ATPase activity which is markedly stimulated by HscB. This is Chaperone protein HscA homolog from Methylobacillus flagellatus (strain ATCC 51484 / DSM 6875 / VKM B-1610 / KT).